A 292-amino-acid chain; its full sequence is Manganese transport system membrane protein MntC (292 aa).

Transmembrane regions (helical) follow at residues 20–40, 58–78, 96–116, 137–157, 168–188, 190–210, 226–246, and 249–269; these read ALTAAILVGIICGVIGCFIIL, VVIAYMIGASFFIGAVITGVI, SAIGILFTAAFALGIVLITGM, TDLWVTLGIGLFVLLIIILFY, VMAQATGIPVQMIHYLLMLLL, LVTVAALQTVGIVLVVAMLIT, LCLAAMFGVISAIAGIYFSVI, and VASGASIVLVASTLFALAFFF.

It belongs to the ABC-3 integral membrane protein family.

Its subcellular location is the cell membrane. In terms of biological role, this protein is probably a component of a manganese permease, a binding protein-dependent, ATP-driven transport system. This is Manganese transport system membrane protein MntC (mntC) from Halalkalibacterium halodurans (strain ATCC BAA-125 / DSM 18197 / FERM 7344 / JCM 9153 / C-125) (Bacillus halodurans).